Reading from the N-terminus, the 297-residue chain is uncharacterized protein (297 aa).

A helical transmembrane segment spans residues 191-211 (VMIILSCSNITILAVLSIVGL). Residues 275–287 (SKTSETQSVSGST) are compositionally biased toward polar residues. Residues 275-297 (SKTSETQSVSGSTHSDEKLTAPM) form a disordered region. The segment covering 288 to 297 (HSDEKLTAPM) has biased composition (basic and acidic residues).

The protein resides in the host membrane. This is an uncharacterized protein from Cryphonectria parasitica mycoreovirus 1 (strain 9B21) (CpMYRV-1).